The following is a 671-amino-acid chain: Probable potassium transport system protein Kup 2 (671 aa).

12 helical membrane-spanning segments follow: residues 18–38 (GFLI…LYAM), 60–80 (VSLV…LIAL), 103–123 (WLIV…ALTP), 149–169 (VTTL…ASLV), 173–193 (FGPI…INSF), 218–238 (AGFF…ALYS), 252–272 (WPFV…WLLA), 292–312 (MVIY…QALI), 343–363 (LYIP…VLYF), 373–393 (YSLA…YFLI), 402–422 (IAFI…ASLV), and 424–444 (FING…VMFI).

It belongs to the HAK/KUP transporter (TC 2.A.72) family.

It is found in the cell membrane. The catalysed reaction is K(+)(in) + H(+)(in) = K(+)(out) + H(+)(out). Functionally, transport of potassium into the cell. Likely operates as a K(+):H(+) symporter. The sequence is that of Probable potassium transport system protein Kup 2 from Lactococcus lactis subsp. cremoris (strain SK11).